The chain runs to 322 residues: NADH-quinone oxidoreductase subunit H (322 aa).

Transmembrane regions (helical) follow at residues 12-32 (IGKA…MSFI), 79-99 (IFIL…AVVP), 111-131 (VGLL…LFAG), 151-171 (LSYE…TGSF), 183-203 (LWNV…GVAV), 234-254 (FFVG…TLFF), 262-282 (LPPF…FILL), and 301-321 (VCLP…LMNV).

Belongs to the complex I subunit 1 family. NDH-1 is composed of 13 different subunits. Subunits NuoA, H, J, K, L, M, N constitute the membrane sector of the complex.

Its subcellular location is the cell inner membrane. The catalysed reaction is a quinone + NADH + 5 H(+)(in) = a quinol + NAD(+) + 4 H(+)(out). Functionally, NDH-1 shuttles electrons from NADH, via FMN and iron-sulfur (Fe-S) centers, to quinones in the respiratory chain. The immediate electron acceptor for the enzyme in this species is believed to be ubiquinone. Couples the redox reaction to proton translocation (for every two electrons transferred, four hydrogen ions are translocated across the cytoplasmic membrane), and thus conserves the redox energy in a proton gradient. This subunit may bind ubiquinone. The protein is NADH-quinone oxidoreductase subunit H of Shewanella oneidensis (strain ATCC 700550 / JCM 31522 / CIP 106686 / LMG 19005 / NCIMB 14063 / MR-1).